The sequence spans 427 residues: Zinc finger protein DPF3 (427 aa).

The interval Leu182–Asp244 is disordered. Over residues Asn184–Glu199 the composition is skewed to acidic residues. The span at Arg233–Asp244 shows a compositional bias: basic and acidic residues. Residues Tyr247 to His270 form a C2H2-type zinc finger. Residues Ala272–Pro301 form a disordered region. Over residues Ala279–Lys296 the composition is skewed to basic and acidic residues. 2 consecutive PHD-type zinc fingers follow at residues Asn308 to Cys368 and Cys365 to Leu415.

The protein belongs to the requiem/DPF family. In terms of assembly, component of the BAF complex. Interacts with acetylated histones H3 and H4. Component of neuron-specific chromatin remodeling complex (nBAF complex), a subfamily of ATP-dependent SWI/SNF chromatin remodeling complexes. In terms of tissue distribution, expressed in the heart and somites.

It localises to the nucleus. Its function is as follows. Muscle-specific component of the BAF complex, a multiprotein complex involved in transcriptional activation and repression of select genes by chromatin remodeling (alteration of DNA-nucleosome topology). Specifically binds acetylated lysines on histone 3 and 4. In the complex, it acts as a tissue-specific anchor between histone acetylations and methylations and chromatin remodeling. It thereby probably plays an essential role in heart and skeletal muscle development. Belongs to the neuron-specific chromatin remodeling complex (nBAF complex) and plays a role in neural development. This is Zinc finger protein DPF3 (DPF3) from Gallus gallus (Chicken).